The following is a 1257-amino-acid chain: Neurocan core protein (1257 aa).

The N-terminal stretch at 1–22 (MGAESVWASGLLVLWLLLLVSG) is a signal peptide. In terms of domain architecture, Ig-like V-type spans 37–157 (HMLKSGSGPI…EQDLVTLEVT (121 aa)). 5 cysteine pairs are disulfide-bonded: Cys58-Cys139, Cys181-Cys252, Cys205-Cys226, Cys279-Cys354, and Cys303-Cys324. Asn121 carries an N-linked (GlcNAc...) asparagine glycan. Link domains follow at residues 159-254 (VVFH…YCFA) and 258-356 (GGEV…YCFR). Asn339 carries N-linked (GlcNAc...) asparagine glycosylation. Residues 361-391 (TPQRGDSEIPSSGDEGEIVSAEGPPAPELKP) form a disordered region. Residues Ser380 and Ser410 are each glycosylated (O-linked (Xyl...) (chondroitin sulfate) serine). Low complexity predominate over residues 447–459 (SSTGVPSPSSLGV). 3 disordered regions span residues 447–493 (SSTG…FQQQ), 550–610 (GSLG…AVPS), and 683–707 (GAED…GSPE). Residues 464–473 (TTPSGTQVAP) show a composition bias toward polar residues. Positions 569–580 (SPSTVPSTDSTP) are enriched in low complexity. N-linked (GlcNAc...) asparagine glycosylation is present at Asn737. O-linked (Xyl...) (chondroitin sulfate) serine glycosylation is present at Ser944. The 37-residue stretch at 949 to 985 (PTDPCENNPCLHGGTCRTNGTMYGCSCDQGYAGENCE) folds into the EGF-like 1 domain. 11 disulfides stabilise this stretch: Cys953–Cys964, Cys958–Cys973, Cys975–Cys984, Cys991–Cys1002, Cys996–Cys1011, Cys1013–Cys1022, Cys1029–Cys1040, Cys1057–Cys1149, Cys1125–Cys1141, Cys1156–Cys1199, and Cys1185–Cys1212. Asn967 carries N-linked (GlcNAc...) asparagine glycosylation. The 37-residue stretch at 987–1023 (DIDDCLCSPCENGGTCIDEVNGFICLCLPSYGGNLCE) folds into the EGF-like 2; calcium-binding domain. A C-type lectin domain is found at 1025–1154 (DTEGCDRGWH…LPYVCKKGTV (130 aa)). The Sushi domain occupies 1154-1214 (VLCGPPPAVE…WDRPQIVCTK (61 aa)). Asn1164 carries N-linked (GlcNAc...) asparagine glycosylation. Positions 1215-1244 (PRRSHRMRRHHHHPHRHHKPRKEHRKHKRH) are enriched in basic residues. The disordered stretch occupies residues 1215–1257 (PRRSHRMRRHHHHPHRHHKPRKEHRKHKRHPAEDWEKDEGDFC).

The protein belongs to the aggrecan/versican proteoglycan family. Post-translationally, two isoforms were found that probably arise by proteolytic processing. The large isoform is predominant in early postnatal brain, the small isoform is found in adult brain. O-glycosylated; contains chondroitin sulfate. As to expression, early postnatal and adult brain; not expressed in kidney, lung, liver and muscle.

It is found in the secreted. In terms of biological role, may modulate neuronal adhesion and neurite growth during development by binding to neural cell adhesion molecules (NG-CAM and N-CAM). Chondroitin sulfate proteoglycan; binds to hyaluronic acid. The polypeptide is Neurocan core protein (Ncan) (Rattus norvegicus (Rat)).